Reading from the N-terminus, the 203-residue chain is IQ domain-containing protein F3 (203 aa).

Residues 1-12 (MELDQDKKKETP) are compositionally biased toward basic and acidic residues. The tract at residues 1–111 (MELDQDKKKE…CETQEADRSE (111 aa)) is disordered. Residues 13–82 (EETENVNEVQ…EADKAILERS (70 aa)) adopt a coiled-coil conformation. Positions 29–38 (DEETEAEAEE) are enriched in acidic residues. The segment covering 39–51 (ADKAILERSDSVK) has biased composition (basic and acidic residues). Residues 64 to 73 (DEETEAEAEE) are compositionally biased toward acidic residues. Composition is skewed to basic and acidic residues over residues 74–86 (ADKA…DSVK) and 96–111 (QIQE…DRSE). The region spanning 129–158 (VMLAGVKIQAWWRGTLVRRTLLLAALNAWT) is the IQ domain.

This is IQ domain-containing protein F3 (Iqcf3) from Mus musculus (Mouse).